A 418-amino-acid chain; its full sequence is Glutamyl-tRNA reductase (418 aa).

Substrate contacts are provided by residues 49–52 (TCNR), serine 109, 114–116 (EPQ), and glutamine 120. Cysteine 50 acts as the Nucleophile in catalysis. NADP(+) is bound at residue 189 to 194 (GAGETI).

The protein belongs to the glutamyl-tRNA reductase family. In terms of assembly, homodimer.

It catalyses the reaction (S)-4-amino-5-oxopentanoate + tRNA(Glu) + NADP(+) = L-glutamyl-tRNA(Glu) + NADPH + H(+). The protein operates within porphyrin-containing compound metabolism; protoporphyrin-IX biosynthesis; 5-aminolevulinate from L-glutamyl-tRNA(Glu): step 1/2. Catalyzes the NADPH-dependent reduction of glutamyl-tRNA(Glu) to glutamate 1-semialdehyde (GSA). The polypeptide is Glutamyl-tRNA reductase (Citrobacter koseri (strain ATCC BAA-895 / CDC 4225-83 / SGSC4696)).